The chain runs to 79 residues: MSDKGRPLPKFGEWDVNDPASAEGFTVIFNKARDEKKTGGKPGSPGKSSEGHVKSGGGDPSKPQPKKWLCCMQAPAVDS.

The interval 31–68 (KARDEKKTGGKPGSPGKSSEGHVKSGGGDPSKPQPKKW) is disordered. Position 44 is a phosphoserine (S44).

This sequence belongs to the RIN4 family. In terms of processing, proteolytic cleaved by P.syringae pv tomato AvrRpt2 after Gly-12; this cleavage is critical for subsequent proteasome-dependent elimination.

This is Protein NOI4 from Arabidopsis thaliana (Mouse-ear cress).